The chain runs to 215 residues: Cytochrome b6 (215 aa).

The helical transmembrane segment at 32-52 (IFYCLGGITLVCFLIQFATGF) threads the bilayer. Cysteine 35 is a heme c binding site. 2 residues coordinate heme b: histidine 86 and histidine 100. The next 3 membrane-spanning stretches (helical) occupy residues 90 to 110 (ASMM…TGGF), 116 to 136 (LTWV…VTGY), and 186 to 206 (AHTF…FLMI). 2 residues coordinate heme b: histidine 187 and histidine 202.

Belongs to the cytochrome b family. PetB subfamily. As to quaternary structure, the 4 large subunits of the cytochrome b6-f complex are cytochrome b6, subunit IV (17 kDa polypeptide, PetD), cytochrome f and the Rieske protein, while the 4 small subunits are PetG, PetL, PetM and PetN. The complex functions as a dimer. It depends on heme b as a cofactor. Heme c serves as cofactor.

The protein localises to the cellular thylakoid membrane. Its function is as follows. Component of the cytochrome b6-f complex, which mediates electron transfer between photosystem II (PSII) and photosystem I (PSI), cyclic electron flow around PSI, and state transitions. The sequence is that of Cytochrome b6 from Trichormus variabilis (strain ATCC 29413 / PCC 7937) (Anabaena variabilis).